The chain runs to 180 residues: Large ribosomal subunit protein uL5 (180 aa).

It belongs to the universal ribosomal protein uL5 family. Part of the 50S ribosomal subunit; part of the 5S rRNA/L5/L18/L25 subcomplex. Contacts the 5S rRNA and the P site tRNA. Forms a bridge to the 30S subunit in the 70S ribosome.

In terms of biological role, this is one of the proteins that bind and probably mediate the attachment of the 5S RNA into the large ribosomal subunit, where it forms part of the central protuberance. In the 70S ribosome it contacts protein S13 of the 30S subunit (bridge B1b), connecting the 2 subunits; this bridge is implicated in subunit movement. Contacts the P site tRNA; the 5S rRNA and some of its associated proteins might help stabilize positioning of ribosome-bound tRNAs. The protein is Large ribosomal subunit protein uL5 of Spiroplasma kunkelii.